A 313-amino-acid chain; its full sequence is Ribosomal RNA small subunit methyltransferase H (313 aa).

Residues 35–37 (GGH), D55, F81, D103, and Q110 each bind S-adenosyl-L-methionine.

It belongs to the methyltransferase superfamily. RsmH family.

The protein localises to the cytoplasm. It catalyses the reaction cytidine(1402) in 16S rRNA + S-adenosyl-L-methionine = N(4)-methylcytidine(1402) in 16S rRNA + S-adenosyl-L-homocysteine + H(+). In terms of biological role, specifically methylates the N4 position of cytidine in position 1402 (C1402) of 16S rRNA. The sequence is that of Ribosomal RNA small subunit methyltransferase H from Azotobacter vinelandii (strain DJ / ATCC BAA-1303).